Consider the following 60-residue polypeptide: Large ribosomal subunit protein bL32 (60 aa).

Positions 1 to 19 (MGVPKRKTSKGRRDKRRAH) are enriched in basic residues. The segment at 1 to 20 (MGVPKRKTSKGRRDKRRAHL) is disordered.

It belongs to the bacterial ribosomal protein bL32 family.

This Syntrophobacter fumaroxidans (strain DSM 10017 / MPOB) protein is Large ribosomal subunit protein bL32.